We begin with the raw amino-acid sequence, 527 residues long: N-acetylglutamate synthase, mitochondrial (527 aa).

Residues 1-39 (MAKVNSGSSGCRAMVMAGQFWTKPFALSSQRSGPHRRSA) constitute a mitochondrion transit peptide. The interval 28-65 (SSQRSGPHRRSAAEVNRRMSSSRTAGHGSKTPLWSQQE) is disordered. Residues 40–83 (AEVNRRMSSSRTAGHGSKTPLWSQQESYNHSSLGERSAWSNRTL) form a may stabilize the oligomeric structure region. An amino-acid kinase domain (AAK) region spans residues 40 to 361 (AEVNRRMSSS…SGTLFKNGDP (322 aa)). The N-acetyltransferase domain occupies 360–511 (DPIRRYSSLE…FAKSHPDSFC (152 aa)). Substrate-binding positions include Lys-386, Lys-429, and 459 to 464 (RSRTTN).

It belongs to the acetyltransferase family. In terms of assembly, homodimer. Homotetramer.

The protein localises to the mitochondrion matrix. It catalyses the reaction L-glutamate + acetyl-CoA = N-acetyl-L-glutamate + CoA + H(+). Its activity is regulated as follows. Inhibited by L-arginine. In terms of biological role, plays a role in the regulation of ureagenesis by producing the essential cofactor N-acetylglutamate (NAG), thus modulating carbamoylphosphate synthase I (cps1) activity. This chain is N-acetylglutamate synthase, mitochondrial, found in Danio rerio (Zebrafish).